The primary structure comprises 289 residues: 33 kDa chaperonin (289 aa).

2 disulfides stabilise this stretch: Cys229/Cys231 and Cys262/Cys265.

It belongs to the HSP33 family. Under oxidizing conditions two disulfide bonds are formed involving the reactive cysteines. Under reducing conditions zinc is bound to the reactive cysteines and the protein is inactive.

The protein resides in the cytoplasm. In terms of biological role, redox regulated molecular chaperone. Protects both thermally unfolding and oxidatively damaged proteins from irreversible aggregation. Plays an important role in the bacterial defense system toward oxidative stress. The chain is 33 kDa chaperonin from Pectobacterium atrosepticum (strain SCRI 1043 / ATCC BAA-672) (Erwinia carotovora subsp. atroseptica).